Reading from the N-terminus, the 192-residue chain is Xanthine phosphoribosyltransferase (192 aa).

Residues Leu20 and Asn27 each coordinate xanthine. 128 to 132 serves as a coordination point for 5-phospho-alpha-D-ribose 1-diphosphate; sequence ANGQA. Lys156 serves as a coordination point for xanthine.

This sequence belongs to the purine/pyrimidine phosphoribosyltransferase family. Xpt subfamily. Homodimer.

The protein resides in the cytoplasm. The enzyme catalyses XMP + diphosphate = xanthine + 5-phospho-alpha-D-ribose 1-diphosphate. The protein operates within purine metabolism; XMP biosynthesis via salvage pathway; XMP from xanthine: step 1/1. Functionally, converts the preformed base xanthine, a product of nucleic acid breakdown, to xanthosine 5'-monophosphate (XMP), so it can be reused for RNA or DNA synthesis. The sequence is that of Xanthine phosphoribosyltransferase from Listeria innocua serovar 6a (strain ATCC BAA-680 / CLIP 11262).